The primary structure comprises 465 residues: UDP-N-acetylmuramate--L-alanine ligase (465 aa).

Residue glycine 112–threonine 118 participates in ATP binding.

This sequence belongs to the MurCDEF family.

The protein resides in the cytoplasm. It catalyses the reaction UDP-N-acetyl-alpha-D-muramate + L-alanine + ATP = UDP-N-acetyl-alpha-D-muramoyl-L-alanine + ADP + phosphate + H(+). It participates in cell wall biogenesis; peptidoglycan biosynthesis. Functionally, cell wall formation. This is UDP-N-acetylmuramate--L-alanine ligase from Burkholderia orbicola (strain MC0-3).